Consider the following 143-residue polypeptide: Peptide methionine sulfoxide reductase MsrB (143 aa).

Positions 16–139 constitute a MsrB domain; sequence DAELRRRLTP…NSAALNFESR (124 aa). Positions 55, 58, 104, and 107 each coordinate Zn(2+). Cysteine 128 functions as the Nucleophile in the catalytic mechanism.

This sequence belongs to the MsrB Met sulfoxide reductase family. Requires Zn(2+) as cofactor.

The enzyme catalyses L-methionyl-[protein] + [thioredoxin]-disulfide + H2O = L-methionyl-(R)-S-oxide-[protein] + [thioredoxin]-dithiol. The chain is Peptide methionine sulfoxide reductase MsrB from Burkholderia ambifaria (strain ATCC BAA-244 / DSM 16087 / CCUG 44356 / LMG 19182 / AMMD) (Burkholderia cepacia (strain AMMD)).